Here is a 512-residue protein sequence, read N- to C-terminus: MMNLPWLTIIVLFPILAGLLIPFIPDEKGKTIRWYALGVGILDFLLITYIFGYHYNFKDPSLQLVEDYSWVPLLRFHWCLGVDGLSMPLVLLTGFVTTLAILGAWPVKRNAKLFYFLMLAMYSGQIGVFVSQDLLLFFFMWELELIPVYLLLLVWGGKKRLYAATKFILYTAIGSIFILLAGLTMAFYGDIVTFDMRALKLKEYPLNLEILLYIGFLIAYAVKLPAFPLHTWLPDTHGEAHYSTCMLLAGILLKMGGYALIRINMDMLPNAHLIFAPFLIIIGVINIIYAALTSFAQRNMKRKIAYSSVSHMGFVLIGIGSLTNLGLSGAVLQMISHGLIGASLFFLAGTTYDRTRTLILEDMGGVAKKMPKTFAMFTTCSLASLALPGMSGFVAELMVFLGFATSASYSFEFKAIITFLEGIGIILTPIYLLSMLRQAFYGSESFTLLNKRKLIDAGPREIFVITCLVLPILGIGIYPKMATQIYNSKTETVVQHLQQVQSTFEKTSTLSL.

Transmembrane regions (helical) follow at residues 4 to 24 (LPWLTIIVLFPILAGLLIPFI), 34 to 54 (WYALGVGILDFLLITYIFGYH), 87 to 107 (MPLVLLTGFVTTLAILGAWPV), 111 to 131 (AKLFYFLMLAMYSGQIGVFVS), 134 to 154 (LLLFFFMWELELIPVYLLLLV), 167 to 187 (FILYTAIGSIFILLAGLTMAF), 210 to 230 (ILLYIGFLIAYAVKLPAFPLH), 241 to 261 (HYSTCMLLAGILLKMGGYALI), 273 to 293 (LIFAPFLIIIGVINIIYAALT), 312 to 332 (MGFVLIGIGSLTNLGLSGAVL), 333 to 353 (QMISHGLIGASLFFLAGTTYD), 373 to 395 (TFAMFTTCSLASLALPGMSGFVA), 416 to 436 (IITFLEGIGIILTPIYLLSML), and 462 to 482 (IFVITCLVLPILGIGIYPKMA).

The protein belongs to the complex I subunit 4 family.

Its subcellular location is the plastid. It localises to the chloroplast thylakoid membrane. The enzyme catalyses a plastoquinone + NADH + (n+1) H(+)(in) = a plastoquinol + NAD(+) + n H(+)(out). It carries out the reaction a plastoquinone + NADPH + (n+1) H(+)(in) = a plastoquinol + NADP(+) + n H(+)(out). This chain is NAD(P)H-quinone oxidoreductase chain 4, chloroplastic, found in Chlorokybus atmophyticus (Soil alga).